Reading from the N-terminus, the 415-residue chain is Carbamoyl phosphate synthase arginine-specific small chain (415 aa).

A mitochondrion-targeting transit peptide spans 1–17 (MLRFLKPFPLRFGKRFY). The L-glutamine site is built by serine 88, glycine 272, and glycine 274. The region spanning 225 to 412 (NIAVIDCGVK…IKEAIKYQKS (188 aa)) is the Glutamine amidotransferase type-1 domain. Residue cysteine 301 is the Nucleophile of the active site. Residues methionine 302, glutamine 305, asparagine 343, glycine 345, and tyrosine 346 each contribute to the L-glutamine site. Active-site residues include histidine 385 and glutamate 387.

This sequence belongs to the CarA family. In terms of assembly, heterodimer composed of 2 chains; the small (or glutamine) chain promotes the hydrolysis of glutamine to ammonia, which is used by the large (or ammonia) chain to synthesize carbamoyl phosphate.

The protein localises to the mitochondrion. It is found in the cytoplasm. The catalysed reaction is hydrogencarbonate + L-glutamine + 2 ATP + H2O = carbamoyl phosphate + L-glutamate + 2 ADP + phosphate + 2 H(+). It catalyses the reaction L-glutamine + H2O = L-glutamate + NH4(+). Its pathway is amino-acid biosynthesis; L-arginine biosynthesis; carbamoyl phosphate from bicarbonate: step 1/1. In terms of biological role, small subunit of the arginine-specific carbamoyl phosphate synthase (CPSase). CPSase catalyzes the formation of carbamoyl phosphate from the ammonia moiety of glutamine, carbonate, and phosphate donated by ATP, the first step of the arginine biosynthetic pathway. The small subunit (glutamine amidotransferase) binds and cleaves glutamine to supply the large subunit with the substrate ammonia. The protein is Carbamoyl phosphate synthase arginine-specific small chain (arg5) of Schizosaccharomyces pombe (strain 972 / ATCC 24843) (Fission yeast).